A 452-amino-acid polypeptide reads, in one-letter code: tRNA modification GTPase MnmE (452 aa).

Residues arginine 24, glutamate 81, and arginine 120 each coordinate (6S)-5-formyl-5,6,7,8-tetrahydrofolate. The TrmE-type G domain maps to 216–373; that stretch reads GIKTVIVGAP…LFGAIGRWAD (158 aa). GTP contacts are provided by residues 226 to 231, 245 to 251, and 270 to 273; these read NVGKSS, SAEPGTT, and DTAG. Residues serine 230 and threonine 251 each coordinate Mg(2+). Lysine 452 lines the (6S)-5-formyl-5,6,7,8-tetrahydrofolate pocket.

This sequence belongs to the TRAFAC class TrmE-Era-EngA-EngB-Septin-like GTPase superfamily. TrmE GTPase family. As to quaternary structure, homodimer. Heterotetramer of two MnmE and two MnmG subunits. K(+) is required as a cofactor.

The protein resides in the cytoplasm. In terms of biological role, exhibits a very high intrinsic GTPase hydrolysis rate. Involved in the addition of a carboxymethylaminomethyl (cmnm) group at the wobble position (U34) of certain tRNAs, forming tRNA-cmnm(5)s(2)U34. The polypeptide is tRNA modification GTPase MnmE (Opitutus terrae (strain DSM 11246 / JCM 15787 / PB90-1)).